A 503-amino-acid polypeptide reads, in one-letter code: Na(+)-translocating NADH-quinone reductase subunit B (503 aa).

The next 3 helical transmembrane spans lie at 55–75 (MMLV…NSGL), 120–142 (IFLP…FAII), and 160–180 (LILP…FGVV). The residue at position 248 (threonine 248) is an FMN phosphoryl threonine. Helical transmembrane passes span 361–381 (TSTV…IASW), 384–404 (MLSF…MSIL), 417–437 (FFIP…LVFM), 452–472 (WLYG…NPAY), and 475–495 (GVML…NIAL).

Belongs to the NqrB/RnfD family. As to quaternary structure, composed of six subunits; NqrA, NqrB, NqrC, NqrD, NqrE and NqrF. It depends on FMN as a cofactor.

It is found in the cell inner membrane. The enzyme catalyses a ubiquinone + n Na(+)(in) + NADH + H(+) = a ubiquinol + n Na(+)(out) + NAD(+). Its function is as follows. NQR complex catalyzes the reduction of ubiquinone-1 to ubiquinol by two successive reactions, coupled with the transport of Na(+) ions from the cytoplasm to the periplasm. NqrA to NqrE are probably involved in the second step, the conversion of ubisemiquinone to ubiquinol. In Chlamydia trachomatis serovar A (strain ATCC VR-571B / DSM 19440 / HAR-13), this protein is Na(+)-translocating NADH-quinone reductase subunit B.